We begin with the raw amino-acid sequence, 277 residues long: NH(3)-dependent NAD(+) synthetase (277 aa).

Position 36–43 (Gly36–Ser43) interacts with ATP. Asp42 is a Mg(2+) binding site. A deamido-NAD(+)-binding site is contributed by Arg118. Thr138 serves as a coordination point for ATP. Glu143 serves as a coordination point for Mg(2+). ATP is bound by residues Lys167 and Ser189.

It belongs to the NAD synthetase family. As to quaternary structure, homodimer.

It catalyses the reaction deamido-NAD(+) + NH4(+) + ATP = AMP + diphosphate + NAD(+) + H(+). It functions in the pathway cofactor biosynthesis; NAD(+) biosynthesis; NAD(+) from deamido-NAD(+) (ammonia route): step 1/1. Functionally, catalyzes the ATP-dependent amidation of deamido-NAD to form NAD. Uses ammonia as a nitrogen source. The chain is NH(3)-dependent NAD(+) synthetase from Chlorobium phaeobacteroides (strain DSM 266 / SMG 266 / 2430).